We begin with the raw amino-acid sequence, 156 residues long: MSRRGVIQRRPVPSDSVYNSRLVSMIIRRIMRHGKKSLAARIVYEALKTIEERTGNGALETFERAVRNATPLVEVKARRVGGATYQVPMEVRSERGTTLALRWLVQYSRSRPGRTMASKLANELMDAANETGNAIRKREETHRMAEANKAFAHYRY.

The protein belongs to the universal ribosomal protein uS7 family. In terms of assembly, part of the 30S ribosomal subunit. Contacts proteins S9 and S11.

In terms of biological role, one of the primary rRNA binding proteins, it binds directly to 16S rRNA where it nucleates assembly of the head domain of the 30S subunit. Is located at the subunit interface close to the decoding center, probably blocks exit of the E-site tRNA. The protein is Small ribosomal subunit protein uS7 of Nostoc punctiforme (strain ATCC 29133 / PCC 73102).